Reading from the N-terminus, the 267-residue chain is MIKWLWKANQPQAEMLAQWREALNIPLLAPLNEEEQQRLVSVASHLLQQKRLVPLQGVVLTPLMQARLTLLFALPVMELGAKWLDGFHEVLIYPSPFVVDDDWQDDAGLVHSGQTVQSGQSWEQGPIVLNWQDIQDSFDLSGFNLVIHEAAHKLDMRNGGHSNGVPPIAMRDVAAWEYDLHQAMDNIQDEIDMVGVDAASMDAYAASDPAECFAVLSEYFFSAPELLENRFPLVYRHFCTFYRQDPLARLKRWENESQNIESSSPMG.

Zn(2+) contacts are provided by H111, H148, H152, and E211.

Belongs to the MtfA family. As to quaternary structure, interacts with Mlc. The cofactor is Zn(2+).

The protein resides in the cytoplasm. Functionally, involved in the modulation of the activity of the glucose-phosphotransferase system (glucose-PTS). Interacts with the transcriptional repressor Mlc, preventing its interaction with DNA and leading to the modulation of expression of genes regulated by Mlc, including ptsG, which encodes the PTS system glucose-specific EIICB component. Shows zinc-dependent metallopeptidase activity. This chain is Mlc titration factor A, found in Yersinia enterocolitica serotype O:8 / biotype 1B (strain NCTC 13174 / 8081).